The following is a 323-amino-acid chain: tRNA U34 carboxymethyltransferase (323 aa).

Carboxy-S-adenosyl-L-methionine-binding positions include Lys-91, Trp-105, Lys-110, Gly-130, Asp-152–Thr-154, Ile-181–Glu-182, Met-196, Tyr-200, and Arg-315.

It belongs to the class I-like SAM-binding methyltransferase superfamily. CmoB family. Homotetramer.

The catalysed reaction is carboxy-S-adenosyl-L-methionine + 5-hydroxyuridine(34) in tRNA = 5-carboxymethoxyuridine(34) in tRNA + S-adenosyl-L-homocysteine + H(+). In terms of biological role, catalyzes carboxymethyl transfer from carboxy-S-adenosyl-L-methionine (Cx-SAM) to 5-hydroxyuridine (ho5U) to form 5-carboxymethoxyuridine (cmo5U) at position 34 in tRNAs. This is tRNA U34 carboxymethyltransferase from Escherichia coli O6:H1 (strain CFT073 / ATCC 700928 / UPEC).